The sequence spans 396 residues: Putative N(4)-(beta-N-acetylglucosaminyl)-L-asparaginase GG24090 (396 aa).

Residues 1-23 (MKRHLGTCLWVLCLASTAFSSLA) form the signal peptide. Intrachain disulfides connect cysteine 100–cysteine 105 and cysteine 199–cysteine 215. Catalysis depends on threonine 246, which acts as the Nucleophile. Residues 274-277 (RVGD) and 297-300 (TGDG) contribute to the substrate site. Residues cysteine 357 and cysteine 384 are joined by a disulfide bond.

Belongs to the Ntn-hydrolase family. As to quaternary structure, heterotetramer of two alpha and two beta chains arranged as a dimer of alpha/beta heterodimers. Post-translationally, cleaved into an alpha and beta chain by autocatalysis; this activates the enzyme. The N-terminal residue of the beta subunit is responsible for the nucleophile hydrolase activity.

It catalyses the reaction N(4)-(beta-N-acetyl-D-glucosaminyl)-L-asparagine + H2O = N-acetyl-beta-D-glucosaminylamine + L-aspartate + H(+). Its function is as follows. Cleaves the GlcNAc-Asn bond which joins oligosaccharides to the peptide of asparagine-linked glycoproteins. The chain is Putative N(4)-(beta-N-acetylglucosaminyl)-L-asparaginase GG24090 from Drosophila erecta (Fruit fly).